The following is an 854-amino-acid chain: Patatin-like phospholipase domain-containing protein CHGG_02900 (854 aa).

Disordered regions lie at residues 1-29 (MAGP…YGFP), 58-138 (LSAP…PPLS), and 159-186 (QRRV…RSKD). The span at 96–116 (DLARRPESSGVGFHDEDRTAR) shows a compositional bias: basic and acidic residues. Residues 119 to 132 (PAGAATAAAAGVAT) are compositionally biased toward low complexity. The chain crosses the membrane as a helical span at residues 199–219 (WPLLGVVTCWLVGLSVVHVLA). A PNPLA domain is found at 387 to 578 (LCLSGGATFA…RTDIPIKALN (192 aa)). A GXSXG motif is present at residues 418–422 (GTSGG). S420 (nucleophile) is an active-site residue. D565 acts as the Proton acceptor in catalysis. Disordered stretches follow at residues 724–776 (RENR…SILS) and 791–830 (RGGI…LEFG). Gly residues predominate over residues 729–751 (GGGLGDGGVGSSGGAGGGAGGGQ). Low complexity predominate over residues 752 to 761 (AEAVAGQAAG). A compositionally biased stretch (acidic residues) spans 799 to 812 (TESEDETSDLDADF).

The protein belongs to the PLPL family.

The protein localises to the membrane. In terms of biological role, probable lipid hydrolase. The sequence is that of Patatin-like phospholipase domain-containing protein CHGG_02900 from Chaetomium globosum (strain ATCC 6205 / CBS 148.51 / DSM 1962 / NBRC 6347 / NRRL 1970) (Soil fungus).